The sequence spans 293 residues: Glutamyl-Q tRNA(Asp) synthetase (293 aa).

L-glutamate-binding positions include 26–30 (RFAPS) and Asp-62. Positions 29–39 (PSPTGLLHLGN) match the 'HIGH' region motif. Zn(2+) contacts are provided by Cys-118, Cys-120, Tyr-131, and Cys-135. Residues Tyr-178 and Arg-196 each contribute to the L-glutamate site. The 'KMSKS' region motif lies at 234–238 (KLSKR). Residue Lys-237 coordinates ATP.

It belongs to the class-I aminoacyl-tRNA synthetase family. GluQ subfamily. Zn(2+) serves as cofactor.

Its function is as follows. Catalyzes the tRNA-independent activation of glutamate in presence of ATP and the subsequent transfer of glutamate onto a tRNA(Asp). Glutamate is transferred on the 2-amino-5-(4,5-dihydroxy-2-cyclopenten-1-yl) moiety of the queuosine in the wobble position of the QUC anticodon. The sequence is that of Glutamyl-Q tRNA(Asp) synthetase from Synechococcus sp. (strain CC9605).